Here is a 677-residue protein sequence, read N- to C-terminus: Methionine--tRNA ligase (677 aa).

Positions 15–25 (PYANGSIHLGH) match the 'HIGH' region motif. Cys146, Cys149, Cys159, and Cys162 together coordinate Zn(2+). A 'KMSKS' region motif is present at residues 333-337 (KMSKS). Residue Lys336 participates in ATP binding. In terms of domain architecture, tRNA-binding spans 575-677 (DFAKVDLRVA…AGAKPGHQVK (103 aa)).

It belongs to the class-I aminoacyl-tRNA synthetase family. MetG type 1 subfamily. In terms of assembly, homodimer. Zn(2+) is required as a cofactor.

Its subcellular location is the cytoplasm. It carries out the reaction tRNA(Met) + L-methionine + ATP = L-methionyl-tRNA(Met) + AMP + diphosphate. Functionally, is required not only for elongation of protein synthesis but also for the initiation of all mRNA translation through initiator tRNA(fMet) aminoacylation. The sequence is that of Methionine--tRNA ligase from Escherichia coli (strain ATCC 8739 / DSM 1576 / NBRC 3972 / NCIMB 8545 / WDCM 00012 / Crooks).